We begin with the raw amino-acid sequence, 291 residues long: ATP synthase gamma chain (291 aa).

Belongs to the ATPase gamma chain family. As to quaternary structure, F-type ATPases have 2 components, CF(1) - the catalytic core - and CF(0) - the membrane proton channel. CF(1) has five subunits: alpha(3), beta(3), gamma(1), delta(1), epsilon(1). CF(0) has three main subunits: a, b and c.

It is found in the cell inner membrane. Produces ATP from ADP in the presence of a proton gradient across the membrane. The gamma chain is believed to be important in regulating ATPase activity and the flow of protons through the CF(0) complex. This chain is ATP synthase gamma chain, found in Cupriavidus necator (strain ATCC 17699 / DSM 428 / KCTC 22496 / NCIMB 10442 / H16 / Stanier 337) (Ralstonia eutropha).